We begin with the raw amino-acid sequence, 400 residues long: Multiphosphoryl transfer protein (400 aa).

The region spanning Leu2–Glu142 is the PTS EIIA type-2 domain. His62 acts as the Tele-phosphohistidine intermediate; for EIIA activity in catalysis. At His62 the chain carries Phosphohistidine; by HPr. Residues Ala310–Gly400 enclose the HPr domain. His324 (pros-phosphohistidine intermediate; for HPr activity) is an active-site residue. His324 bears the Phosphohistidine; by EI mark.

Its subcellular location is the cytoplasm. In terms of biological role, the phosphoenolpyruvate-dependent sugar phosphotransferase system (sugar PTS), a major carbohydrate active transport system, catalyzes the phosphorylation of incoming sugar substrates concomitantly with their translocation across the cell membrane. The enzyme II FruAB PTS system is involved in fructose transport. The chain is Multiphosphoryl transfer protein from Vibrio cholerae serotype O1 (strain ATCC 39315 / El Tor Inaba N16961).